Here is a 1755-residue protein sequence, read N- to C-terminus: Transposon Ty1-MR1 Gag-Pol polyprotein (1755 aa).

3 stretches are compositionally biased toward polar residues: residues 1–31 (MESQQLSQHSPISHGSACASVTSKEVQTTQD), 46–60 (VSTQANSQQPTTPLS), and 137–168 (VGTHLNTPSPESGNSFPDSSSAKSNMTSTNQH). Disordered regions lie at residues 1 to 88 (MESQ…YPQQ), 137 to 174 (VGTHLNTPSPESGNSFPDSSSAKSNMTSTNQHVRPPPI), and 350 to 420 (QQES…IRGS). The RNA-binding stretch occupies residues 299-401 (NNGIPINNKV…NSQSRTARAH (103 aa)). A compositionally biased stretch (basic and acidic residues) spans 363-372 (SPSDEKKDSR). Residues 373–411 (TYTNTTKPKSITRNSQKPNNSQSRTARAHNVSTFNNSPG) are compositionally biased toward polar residues. Asp461 functions as the For protease activity; shared with dimeric partner in the catalytic mechanism. The tract at residues 583–640 (NVHTSESTRKYPYPFIHRMLAHANAQTIRYSLKNNTITYFNESDVDWSSAIDYQCPDC) is integrase-type zinc finger-like. The Integrase catalytic domain maps to 660-835 (NSYEPFQYLH…AGLDISTLLP (176 aa)). 2 residues coordinate Mg(2+): Asp671 and Asp736. The tract at residues 958-1172 (AVSPTDSTPP…LGGIGDSNAY (215 aa)) is disordered. Positions 960-969 (SPTDSTPPST) are enriched in low complexity. Positions 1005–1015 (STPQISDIEST) are enriched in polar residues. Residues 1038–1053 (ESSHASKSKDFRHSDS) show a composition bias toward basic and acidic residues. 2 stretches are compositionally biased toward polar residues: residues 1054–1082 (YSDNETNHTNVPISSTGGTNNKTVPQTSE) and 1095–1106 (SIDTSSSESNSL). Positions 1178–1212 (KKRSLEDNETEIKVSRDTWNTKNMRSLEPPRSKKR) match the Bipartite nuclear localization signal motif. Residues 1338–1476 (NNYYITQLDI…DILGLEIKYQ (139 aa)) enclose the Reverse transcriptase Ty1/copia-type domain. Mg(2+) contacts are provided by Asp1346, Asp1427, Asp1428, Asp1610, Glu1652, and Asp1685. One can recognise an RNase H Ty1/copia-type domain in the interval 1610–1752 (DASYGNQPYY…IKTFKLLTNK (143 aa)).

As to quaternary structure, the capsid protein forms a homotrimer, from which the VLPs are assembled. The protease is a homodimer, whose active site consists of two apposed aspartic acid residues. Initially, virus-like particles (VLPs) are composed of the structural unprocessed proteins Gag and Gag-Pol, and also contain the host initiator methionine tRNA (tRNA(i)-Met) which serves as a primer for minus-strand DNA synthesis, and a dimer of genomic Ty RNA. Processing of the polyproteins occurs within the particle and proceeds by an ordered pathway, called maturation. First, the protease (PR) is released by autocatalytic cleavage of the Gag-Pol polyprotein yielding capsid protein p45 and a Pol-p154 precursor protein. This cleavage is a prerequisite for subsequent processing of Pol-p154 at the remaining sites to release the mature structural and catalytic proteins. Maturation takes place prior to the RT reaction and is required to produce transposition-competent VLPs.

The protein localises to the cytoplasm. The protein resides in the nucleus. It catalyses the reaction DNA(n) + a 2'-deoxyribonucleoside 5'-triphosphate = DNA(n+1) + diphosphate. The enzyme catalyses Endonucleolytic cleavage to 5'-phosphomonoester.. Its function is as follows. Capsid protein (CA) is the structural component of the virus-like particle (VLP), forming the shell that encapsulates the retrotransposons dimeric RNA genome. The particles are assembled from trimer-clustered units and there are holes in the capsid shells that allow for the diffusion of macromolecules. CA also has nucleocapsid-like chaperone activity, promoting primer tRNA(i)-Met annealing to the multipartite primer-binding site (PBS), dimerization of Ty1 RNA and initiation of reverse transcription. In terms of biological role, the aspartyl protease (PR) mediates the proteolytic cleavages of the Gag and Gag-Pol polyproteins after assembly of the VLP. Reverse transcriptase/ribonuclease H (RT) is a multifunctional enzyme that catalyzes the conversion of the retro-elements RNA genome into dsDNA within the VLP. The enzyme displays a DNA polymerase activity that can copy either DNA or RNA templates, and a ribonuclease H (RNase H) activity that cleaves the RNA strand of RNA-DNA heteroduplexes during plus-strand synthesis and hydrolyzes RNA primers. The conversion leads to a linear dsDNA copy of the retrotransposon that includes long terminal repeats (LTRs) at both ends. Functionally, integrase (IN) targets the VLP to the nucleus, where a subparticle preintegration complex (PIC) containing at least integrase and the newly synthesized dsDNA copy of the retrotransposon must transit the nuclear membrane. Once in the nucleus, integrase performs the integration of the dsDNA into the host genome. The polypeptide is Transposon Ty1-MR1 Gag-Pol polyprotein (TY1B-MR1) (Saccharomyces cerevisiae (strain ATCC 204508 / S288c) (Baker's yeast)).